Here is a 249-residue protein sequence, read N- to C-terminus: Triosephosphate isomerase (249 aa).

Position 9 to 11 (9 to 11 (NWK)) interacts with substrate. The active-site Electrophile is the histidine 94. Glutamate 166 serves as the catalytic Proton acceptor. Residues glycine 172, serine 211, and 232 to 233 (GG) contribute to the substrate site.

It belongs to the triosephosphate isomerase family. Homodimer.

It is found in the cytoplasm. The catalysed reaction is D-glyceraldehyde 3-phosphate = dihydroxyacetone phosphate. It functions in the pathway carbohydrate biosynthesis; gluconeogenesis. It participates in carbohydrate degradation; glycolysis; D-glyceraldehyde 3-phosphate from glycerone phosphate: step 1/1. Functionally, involved in the gluconeogenesis. Catalyzes stereospecifically the conversion of dihydroxyacetone phosphate (DHAP) to D-glyceraldehyde-3-phosphate (G3P). This is Triosephosphate isomerase from Dechloromonas aromatica (strain RCB).